Here is a 99-residue protein sequence, read N- to C-terminus: Small ribosomal subunit protein uS14m (99 aa).

It belongs to the universal ribosomal protein uS14 family.

It localises to the mitochondrion. The polypeptide is Small ribosomal subunit protein uS14m (RPS14) (Prototheca wickerhamii).